A 430-amino-acid chain; its full sequence is Phosphomethylpyrimidine synthase (430 aa).

Residues Asn67, Met96, Tyr125, His161, 183 to 185 (SRG), 224 to 227 (DALR), and Glu263 each bind substrate. His267 provides a ligand contact to Zn(2+). Tyr290 provides a ligand contact to substrate. Residue His331 participates in Zn(2+) binding. Positions 406, 409, and 413 each coordinate [4Fe-4S] cluster.

Belongs to the ThiC family. Homodimer. [4Fe-4S] cluster serves as cofactor.

The catalysed reaction is 5-amino-1-(5-phospho-beta-D-ribosyl)imidazole + S-adenosyl-L-methionine = 4-amino-2-methyl-5-(phosphooxymethyl)pyrimidine + CO + 5'-deoxyadenosine + formate + L-methionine + 3 H(+). The protein operates within cofactor biosynthesis; thiamine diphosphate biosynthesis. In terms of biological role, catalyzes the synthesis of the hydroxymethylpyrimidine phosphate (HMP-P) moiety of thiamine from aminoimidazole ribotide (AIR) in a radical S-adenosyl-L-methionine (SAM)-dependent reaction. In Campylobacter jejuni subsp. jejuni serotype O:2 (strain ATCC 700819 / NCTC 11168), this protein is Phosphomethylpyrimidine synthase.